The sequence spans 460 residues: uncharacterized protein (460 aa).

One can recognise a TRAM domain in the interval 8–66; the sequence is PVEKNEFIDVVFEDLTHDGAGVAKVKGYPIFVKNGLPGEEAQIKIIKVKKNFAFGRLMK. [4Fe-4S] cluster-binding residues include Cys79, Cys85, Cys88, and Cys166. S-adenosyl-L-methionine-binding residues include Gln290, Tyr319, Glu340, and Asp388. Cys415 (nucleophile) is an active-site residue.

It belongs to the class I-like SAM-binding methyltransferase superfamily. RNA M5U methyltransferase family.

This is an uncharacterized protein from Bacillus cereus (strain ATCC 10987 / NRS 248).